A 382-amino-acid chain; its full sequence is Anhydro-N-acetylmuramic acid kinase (382 aa).

9–16 (GTSLDGID) contributes to the ATP binding site.

Belongs to the anhydro-N-acetylmuramic acid kinase family.

It catalyses the reaction 1,6-anhydro-N-acetyl-beta-muramate + ATP + H2O = N-acetyl-D-muramate 6-phosphate + ADP + H(+). Its pathway is amino-sugar metabolism; 1,6-anhydro-N-acetylmuramate degradation. It participates in cell wall biogenesis; peptidoglycan recycling. Its function is as follows. Catalyzes the specific phosphorylation of 1,6-anhydro-N-acetylmuramic acid (anhMurNAc) with the simultaneous cleavage of the 1,6-anhydro ring, generating MurNAc-6-P. Is required for the utilization of anhMurNAc either imported from the medium or derived from its own cell wall murein, and thus plays a role in cell wall recycling. The sequence is that of Anhydro-N-acetylmuramic acid kinase from Bacillus cereus (strain 03BB102).